Here is a 411-residue protein sequence, read N- to C-terminus: Secretion apparatus protein BsaZ (411 aa).

4 helical membrane-spanning segments follow: residues 28 to 48, 80 to 100, 137 to 157, and 175 to 195; these read IVAL…VDLT, IAAP…LVQS, ALLY…LYHA, and IVLT…VLIL. Residues 341–411 are disordered; sequence AANRGGPPPE…APARTGDQNA (71 aa). The span at 370–404 shows a compositional bias: low complexity; it reads DACADNAFPDDAPPGAAAPNAGSPDSPAPDGGAPA.

Belongs to the type III secretion exporter family.

The protein localises to the cell membrane. Part of the bsa type III secretion system, is involved in the intracellular replication of invading bacteria inside the host cell. Probably necessary for the lysis of the vacuole membrane and escape into the host cell cytoplasm. The sequence is that of Secretion apparatus protein BsaZ (bsaZ) from Burkholderia pseudomallei (strain 1106a).